Here is a 225-residue protein sequence, read N- to C-terminus: Uridylate kinase (225 aa).

Asp-6 contacts Mg(2+). Gly-9 to Ser-10 serves as a coordination point for ATP. Residue Gly-44 participates in UMP binding. Positions 45 and 49 each coordinate ATP. Residues Asp-66 and Thr-114 to Thr-120 each bind UMP. Residues Thr-120 and Asp-121 each contribute to the Mg(2+) site. ATP is bound by residues Thr-140, Asn-141, Tyr-146, and Asp-149. Gly-179 is a UMP binding site. Residue Ser-182 participates in Mg(2+) binding. Ser-182 lines the ATP pocket.

This sequence belongs to the UMP kinase family. In terms of assembly, homohexamer; trimer of dimers.

It localises to the cytoplasm. It carries out the reaction UMP + ATP = UDP + ADP. It functions in the pathway pyrimidine metabolism; CTP biosynthesis via de novo pathway; UDP from UMP (UMPK route): step 1/1. Inhibited by UTP. Its function is as follows. Catalyzes the reversible phosphorylation of UMP to UDP, with ATP as the most efficient phosphate donor. In Pyrococcus furiosus (strain ATCC 43587 / DSM 3638 / JCM 8422 / Vc1), this protein is Uridylate kinase (pyrH).